The chain runs to 215 residues: ATP phosphoribosyltransferase (215 aa).

It belongs to the ATP phosphoribosyltransferase family. Short subfamily. As to quaternary structure, heteromultimer composed of HisG and HisZ subunits.

It localises to the cytoplasm. It catalyses the reaction 1-(5-phospho-beta-D-ribosyl)-ATP + diphosphate = 5-phospho-alpha-D-ribose 1-diphosphate + ATP. It functions in the pathway amino-acid biosynthesis; L-histidine biosynthesis; L-histidine from 5-phospho-alpha-D-ribose 1-diphosphate: step 1/9. Its function is as follows. Catalyzes the condensation of ATP and 5-phosphoribose 1-diphosphate to form N'-(5'-phosphoribosyl)-ATP (PR-ATP). Has a crucial role in the pathway because the rate of histidine biosynthesis seems to be controlled primarily by regulation of HisG enzymatic activity. The polypeptide is ATP phosphoribosyltransferase (Acidithiobacillus ferrooxidans (strain ATCC 23270 / DSM 14882 / CIP 104768 / NCIMB 8455) (Ferrobacillus ferrooxidans (strain ATCC 23270))).